Consider the following 82-residue polypeptide: Small ribosomal subunit protein bS18 (82 aa).

Belongs to the bacterial ribosomal protein bS18 family. In terms of assembly, part of the 30S ribosomal subunit. Forms a tight heterodimer with protein bS6.

Functionally, binds as a heterodimer with protein bS6 to the central domain of the 16S rRNA, where it helps stabilize the platform of the 30S subunit. The chain is Small ribosomal subunit protein bS18 from Chlamydia pneumoniae (Chlamydophila pneumoniae).